We begin with the raw amino-acid sequence, 331 residues long: NmrA-like family domain-containing oxidoreductase himF (331 aa).

Residues 8–13 (GATGNQ), 34–38 (RNAES), 55–56 (DG), 76–78 (TNG), Lys133, and 155–167 (WFFETFLEPQMAA) contribute to the NADP(+) site.

This sequence belongs to the NmrA-type oxidoreductase family.

It functions in the pathway secondary metabolite biosynthesis. NmrA-like family domain-containing oxidoreductase; part of the him gene cluster that mediates the biosynthesis of himeic acid A, a ubiquitin-activating enzyme (E1) inhibitor. First, himA, together with the trans-enoyl reductase himH, catalyzes the formation of apolyketide chain, which is then condensed with leucine by the NRPS activity of himA. Dieckmann cyclization and release from himA gives a tetramic acid intermediate as the product of himA PKS-NRPS. HimG then catalyzes alpha-oxidation of the tetramic acid ring, with a subsequent rearrangement to yield apyrone intermediate. Two terminal methyl groups of polyketide and amide side chains are oxidized to carboxylic acids by himC cytochrome P450 monooxygenase to form himeic acid A. Himeic acid A is further converted to himeic acid B and C during culture growth. No gene responsible for pyrone to pyridone conversion was found in the him gene cluster and himeic acid A is non-enzymatically converted to himeic acid C by the incorporation of an ammonium nitrogen atom in a pH5 buffer, and to himeic acid B at a conversion ratio of 50% during incubation in MeOH for 5 days. The polypeptide is NmrA-like family domain-containing oxidoreductase himF (Aspergillus japonicus).